The chain runs to 507 residues: ATP synthase subunit alpha, chloroplastic (507 aa).

170 to 177 provides a ligand contact to ATP; it reads GDRQTGKT.

Belongs to the ATPase alpha/beta chains family. In terms of assembly, F-type ATPases have 2 components, CF(1) - the catalytic core - and CF(0) - the membrane proton channel. CF(1) has five subunits: alpha(3), beta(3), gamma(1), delta(1), epsilon(1). CF(0) has four main subunits: a, b, b' and c.

Its subcellular location is the plastid. It localises to the chloroplast thylakoid membrane. The enzyme catalyses ATP + H2O + 4 H(+)(in) = ADP + phosphate + 5 H(+)(out). Its function is as follows. Produces ATP from ADP in the presence of a proton gradient across the membrane. The alpha chain is a regulatory subunit. The sequence is that of ATP synthase subunit alpha, chloroplastic from Sorghum bicolor (Sorghum).